The chain runs to 72 residues: MLCPTHGPTTWNPHSCTVVEKCITNLLITTILLCFFNATTYWKLFFGAMFDFIHYQLLFRNSLSEILLLGLG.

Residues 23 to 45 (ITNLLITTILLCFFNATTYWKLF) form a helical membrane-spanning segment.

Its subcellular location is the membrane. This is an uncharacterized protein from Schizosaccharomyces pombe (strain 972 / ATCC 24843) (Fission yeast).